Here is a 37-residue protein sequence, read N- to C-terminus: Large ribosomal subunit protein bL36 (37 aa).

It belongs to the bacterial ribosomal protein bL36 family.

The chain is Large ribosomal subunit protein bL36 from Mycoplasma genitalium (strain ATCC 33530 / DSM 19775 / NCTC 10195 / G37) (Mycoplasmoides genitalium).